The following is a 638-amino-acid chain: Probable potassium transport system protein Kup (638 aa).

The disordered stretch occupies residues 1 to 20; the sequence is MQVEHEVATEGGQAPASSGH. 12 helical membrane-spanning segments follow: residues 24–44, 67–87, 115–135, 153–173, 181–201, 228–248, 263–283, 301–321, 353–373, 382–402, 413–433, and 435–455; these read IAGLAVAAIGVVYGDIGTSPL, ILSLVFWALVTVVSAKYVVFI, AWWLSVLGVFGAALFYGDGMI, PAFKPFVIPIALVVLVGLFVM, VGAIFGPVMVCWFLVLAVLGI, LIGWLALGAVVLAITGGEALY, WFSLVFPALYLNYLGQGALIL, LVYPMVGMATLATIIASQAVI, IYVPGVNWMLLGAVVALVVGF, AYGIAVTLTMMIDTVLAFVVV, AVLFLVVFLAVDIAFFSATTV, and IFAGGWFPLLIGAAIFTLLRT.

The protein belongs to the HAK/KUP transporter (TC 2.A.72) family.

It is found in the cell inner membrane. It catalyses the reaction K(+)(in) + H(+)(in) = K(+)(out) + H(+)(out). Its function is as follows. Transport of potassium into the cell. Likely operates as a K(+):H(+) symporter. This chain is Probable potassium transport system protein Kup, found in Azoarcus sp. (strain BH72).